Reading from the N-terminus, the 242-residue chain is Tryptophan synthase alpha chain (242 aa).

Catalysis depends on proton acceptor residues Glu-31 and Asp-42.

Belongs to the TrpA family. In terms of assembly, tetramer of two alpha and two beta chains.

It catalyses the reaction (1S,2R)-1-C-(indol-3-yl)glycerol 3-phosphate + L-serine = D-glyceraldehyde 3-phosphate + L-tryptophan + H2O. The protein operates within amino-acid biosynthesis; L-tryptophan biosynthesis; L-tryptophan from chorismate: step 5/5. The alpha subunit is responsible for the aldol cleavage of indoleglycerol phosphate to indole and glyceraldehyde 3-phosphate. In Staphylococcus aureus (strain USA300), this protein is Tryptophan synthase alpha chain.